We begin with the raw amino-acid sequence, 301 residues long: Thyrotroph embryonic factor (301 aa).

2 disordered regions span residues Met1–Met70 and Glu130–Cys174. At Ser30 the chain carries Phosphoserine. Over residues Lys39–Leu59 the composition is skewed to basic and acidic residues. The span at Ser131–Ser158 shows a compositional bias: low complexity. Positions Asp231–Tyr294 constitute a bZIP domain. Positions Lys233–Arg253 are basic motif. A leucine-zipper region spans residues Leu254–Ile261.

Belongs to the bZIP family. PAR subfamily. Binds DNA as a homodimer or a heterodimer. Can form a heterodimer with DBP. Isoform Alpha and isoform Beta are expressed at high levels in lung, bladder, kidney, gut and brain.

Its subcellular location is the nucleus. In terms of biological role, transcription factor that binds to and transactivates the TSHB promoter. Binds to a minimal DNA-binding sequence 5'-[TC][AG][AG]TTA[TC][AG]-3'. Also activates the telokin promoter in smooth muscle-specific and calcium-dependent manner. This is Thyrotroph embryonic factor (Tef) from Mus musculus (Mouse).